We begin with the raw amino-acid sequence, 461 residues long: ATP-dependent protease ATPase subunit HslU (461 aa).

ATP contacts are provided by residues isoleucine 18 and 60–65; that span reads GVGKTE. The segment at 157 to 178 is disordered; the sequence is EGSSVKPEPTAQQKESRQKMRK. ATP is bound by residues aspartate 273, glutamate 339, and arginine 411.

The protein belongs to the ClpX chaperone family. HslU subfamily. A double ring-shaped homohexamer of HslV is capped on each side by a ring-shaped HslU homohexamer. The assembly of the HslU/HslV complex is dependent on binding of ATP.

The protein resides in the cytoplasm. In terms of biological role, ATPase subunit of a proteasome-like degradation complex; this subunit has chaperone activity. The binding of ATP and its subsequent hydrolysis by HslU are essential for unfolding of protein substrates subsequently hydrolyzed by HslV. HslU recognizes the N-terminal part of its protein substrates and unfolds these before they are guided to HslV for hydrolysis. This Magnetococcus marinus (strain ATCC BAA-1437 / JCM 17883 / MC-1) protein is ATP-dependent protease ATPase subunit HslU.